The primary structure comprises 111 residues: Putative gamma-glutamylcyclotransferase BH1612 (111 aa).

14 to 17 is a substrate binding site; sequence YGHL. Glu-55 (proton acceptor) is an active-site residue.

This sequence belongs to the gamma-glutamylcyclotransferase family.

Putative gamma-glutamylcyclotransferase. This Halalkalibacterium halodurans (strain ATCC BAA-125 / DSM 18197 / FERM 7344 / JCM 9153 / C-125) (Bacillus halodurans) protein is Putative gamma-glutamylcyclotransferase BH1612.